The primary structure comprises 335 residues: Twinfilin (335 aa).

ADF-H domains are found at residues Ser-4–Leu-140 and Gly-176–His-316. The interval Ser-307 to Lys-335 is disordered. Residues His-316–Ala-325 are compositionally biased toward basic and acidic residues.

It belongs to the actin-binding proteins ADF family. Twinfilin subfamily. In terms of assembly, interacts with G-actin; ADP-actin form.

The protein localises to the cytoplasm. Its subcellular location is the cytoskeleton. The protein resides in the cell cortex. In terms of biological role, actin-binding protein involved in motile and morphological processes. Inhibits actin polymerization, likely by sequestering G-actin. In Dictyostelium discoideum (Social amoeba), this protein is Twinfilin (twfA).